The sequence spans 514 residues: CENP-B homolog protein 1 (514 aa).

The region spanning Asp69 to Ala144 is the HTH CENPB-type domain.

The protein localises to the nucleus. It is found in the chromosome. It localises to the centromere. Binds to centromeric K-type repeat DNA and ARS3002 DNA. The CBH-binding consensus sequence is Py-Pu-A-T-A-T-Py-Pu-T-A. This chain is CENP-B homolog protein 1 (cbh1), found in Schizosaccharomyces pombe (strain 972 / ATCC 24843) (Fission yeast).